The primary structure comprises 341 residues: Glycerol-3-phosphate dehydrogenase [NAD(P)+] (341 aa).

NADPH is bound by residues Ser-14, Phe-15, Arg-35, and Lys-108. Lys-108 and Gly-136 together coordinate sn-glycerol 3-phosphate. Residue Ala-140 coordinates NADPH. 5 residues coordinate sn-glycerol 3-phosphate: Lys-191, Asp-244, Ser-254, Arg-255, and Asn-256. The active-site Proton acceptor is Lys-191. An NADPH-binding site is contributed by Arg-255. Val-279 and Glu-281 together coordinate NADPH.

The protein belongs to the NAD-dependent glycerol-3-phosphate dehydrogenase family.

The protein resides in the cytoplasm. The catalysed reaction is sn-glycerol 3-phosphate + NAD(+) = dihydroxyacetone phosphate + NADH + H(+). The enzyme catalyses sn-glycerol 3-phosphate + NADP(+) = dihydroxyacetone phosphate + NADPH + H(+). It participates in membrane lipid metabolism; glycerophospholipid metabolism. Its function is as follows. Catalyzes the reduction of the glycolytic intermediate dihydroxyacetone phosphate (DHAP) to sn-glycerol 3-phosphate (G3P), the key precursor for phospholipid synthesis. The protein is Glycerol-3-phosphate dehydrogenase [NAD(P)+] of Pseudomonas entomophila (strain L48).